The primary structure comprises 323 residues: L-lactate dehydrogenase (323 aa).

NAD(+) is bound by residues valine 12, aspartate 33, and tyrosine 65. Substrate contacts are provided by residues arginine 94 and 126-129 (NPCD). Threonine 149 is an NAD(+) binding site. 154 to 157 (ETMR) contributes to the substrate binding site. Histidine 181 (proton acceptor) is an active-site residue. Position 234 (threonine 234) interacts with substrate.

Belongs to the LDH/MDH superfamily. LDH family. As to quaternary structure, homotetramer.

It localises to the cytoplasm. The catalysed reaction is (S)-lactate + NAD(+) = pyruvate + NADH + H(+). It participates in fermentation; pyruvate fermentation to lactate; (S)-lactate from pyruvate: step 1/1. Catalyzes the conversion of lactate to pyruvate. The protein is L-lactate dehydrogenase of Mycoplasmoides gallisepticum (strain R(low / passage 15 / clone 2)) (Mycoplasma gallisepticum).